The following is a 264-amino-acid chain: S-adenosylmethionine decarboxylase proenzyme (264 aa).

Ser-113 acts as the Schiff-base intermediate with substrate; via pyruvic acid in catalysis. A Pyruvic acid (Ser); by autocatalysis modification is found at Ser-113. Catalysis depends on His-118, which acts as the Proton acceptor; for processing activity. Residue Cys-141 is the Proton donor; for catalytic activity of the active site.

The protein belongs to the prokaryotic AdoMetDC family. Type 2 subfamily. As to quaternary structure, heterooctamer of four alpha and four beta chains arranged as a tetramer of alpha/beta heterodimers. The cofactor is pyruvate. Is synthesized initially as an inactive proenzyme. Formation of the active enzyme involves a self-maturation process in which the active site pyruvoyl group is generated from an internal serine residue via an autocatalytic post-translational modification. Two non-identical subunits are generated from the proenzyme in this reaction, and the pyruvate is formed at the N-terminus of the alpha chain, which is derived from the carboxyl end of the proenzyme. The post-translation cleavage follows an unusual pathway, termed non-hydrolytic serinolysis, in which the side chain hydroxyl group of the serine supplies its oxygen atom to form the C-terminus of the beta chain, while the remainder of the serine residue undergoes an oxidative deamination to produce ammonia and the pyruvoyl group blocking the N-terminus of the alpha chain.

It catalyses the reaction S-adenosyl-L-methionine + H(+) = S-adenosyl 3-(methylsulfanyl)propylamine + CO2. The protein operates within amine and polyamine biosynthesis; S-adenosylmethioninamine biosynthesis; S-adenosylmethioninamine from S-adenosyl-L-methionine: step 1/1. Catalyzes the decarboxylation of S-adenosylmethionine to S-adenosylmethioninamine (dcAdoMet), the propylamine donor required for the synthesis of the polyamines spermine and spermidine from the diamine putrescine. This Pseudomonas paraeruginosa (strain DSM 24068 / PA7) (Pseudomonas aeruginosa (strain PA7)) protein is S-adenosylmethionine decarboxylase proenzyme.